A 916-amino-acid chain; its full sequence is Translation initiation factor IF-2 (916 aa).

Residues 1–325 (MTDSNDDKTL…QEKFRRSQVQ (325 aa)) form a disordered region. Residues 60–91 (ITPATPAAPVRAAEPAPAPAQARPQQSTPAPR) are compositionally biased toward low complexity. Polar residues predominate over residues 97–108 (GQANQRPQQSYQ). The span at 125–182 (SPEEMDARRRALAESQARDAQDAIRRAEEEKRRAAEEAVRKAAEAEEAARRAVEEAAR) shows a compositional bias: basic and acidic residues. 2 stretches are compositionally biased toward low complexity: residues 183 to 209 (QAEAAAAAAAEPAVTAPAPAPVTAEAR) and 229 to 243 (DGAAARPAPGAPAAV). The region spanning 414–581 (SRPPVVTIMG…AVLLQAEILD (168 aa)) is the tr-type G domain. Residues 423–430 (GHVDHGKT) are G1. GTP is bound at residue 423–430 (GHVDHGKT). Residues 448-452 (GITQH) are G2. Residues 469 to 472 (DTPG) are G3. GTP is bound by residues 469-473 (DTPGH) and 523-526 (NKID). Residues 523-526 (NKID) are G4. Residues 559–561 (SAK) form a G5 region.

This sequence belongs to the TRAFAC class translation factor GTPase superfamily. Classic translation factor GTPase family. IF-2 subfamily.

The protein localises to the cytoplasm. Functionally, one of the essential components for the initiation of protein synthesis. Protects formylmethionyl-tRNA from spontaneous hydrolysis and promotes its binding to the 30S ribosomal subunits. Also involved in the hydrolysis of GTP during the formation of the 70S ribosomal complex. The chain is Translation initiation factor IF-2 from Rhizobium etli (strain ATCC 51251 / DSM 11541 / JCM 21823 / NBRC 15573 / CFN 42).